Consider the following 75-residue polypeptide: Defensin-like protein 59 (75 aa).

The N-terminal stretch at 1–19 (MNITKSYVVIFFLVMLTNS) is a signal peptide. Intrachain disulfides connect C39–C73, C43–C66, C52–C71, and C56–C72.

This sequence belongs to the DEFL family.

Its subcellular location is the secreted. The chain is Defensin-like protein 59 from Arabidopsis thaliana (Mouse-ear cress).